The following is a 244-amino-acid chain: DNA repair protein RecO (244 aa).

The protein belongs to the RecO family.

Its function is as follows. Involved in DNA repair and RecF pathway recombination. The sequence is that of DNA repair protein RecO from Polynucleobacter necessarius subsp. necessarius (strain STIR1).